The primary structure comprises 301 residues: 4-hydroxy-tetrahydrodipicolinate synthase (301 aa).

Pyruvate is bound at residue Thr50. Tyr138 functions as the Proton donor/acceptor in the catalytic mechanism. Residue Lys167 is the Schiff-base intermediate with substrate of the active site. Residue Ile209 coordinates pyruvate.

It belongs to the DapA family. Homotetramer; dimer of dimers.

Its subcellular location is the cytoplasm. The enzyme catalyses L-aspartate 4-semialdehyde + pyruvate = (2S,4S)-4-hydroxy-2,3,4,5-tetrahydrodipicolinate + H2O + H(+). Its pathway is amino-acid biosynthesis; L-lysine biosynthesis via DAP pathway; (S)-tetrahydrodipicolinate from L-aspartate: step 3/4. Catalyzes the condensation of (S)-aspartate-beta-semialdehyde [(S)-ASA] and pyruvate to 4-hydroxy-tetrahydrodipicolinate (HTPA). The polypeptide is 4-hydroxy-tetrahydrodipicolinate synthase (Sorangium cellulosum (strain So ce56) (Polyangium cellulosum (strain So ce56))).